A 382-amino-acid polypeptide reads, in one-letter code: tRNA(Met) cytidine acetate ligase (382 aa).

Residues 7–20 (ITEYNPFHNGHVYH), G100, N153, and R178 each bind ATP.

This sequence belongs to the TmcAL family.

It localises to the cytoplasm. It carries out the reaction cytidine(34) in elongator tRNA(Met) + acetate + ATP = N(4)-acetylcytidine(34) in elongator tRNA(Met) + AMP + diphosphate. Its function is as follows. Catalyzes the formation of N(4)-acetylcytidine (ac(4)C) at the wobble position of elongator tRNA(Met), using acetate and ATP as substrates. First activates an acetate ion to form acetyladenylate (Ac-AMP) and then transfers the acetyl group to tRNA to form ac(4)C34. The sequence is that of tRNA(Met) cytidine acetate ligase from Staphylococcus carnosus (strain TM300).